The sequence spans 144 residues: MNFKYIVAVSFLIASAYARSEENDEQSLSQRDVLEEESLREIRGIGTKILGGVKTALKGALKELASTYANGKRTAEEHEVMKRLEVVMRDLDSLDYPEEASERETRDFNQEEIANLYTKKEKRLLGPVLGLVSNALGGLLKNIG.

The N-terminal stretch at 1–18 (MNFKYIVAVSFLIASAYA) is a signal peptide. Residues 19–43 (RSEENDEQSLSQRDVLEEESLREIR) constitute a propeptide that is removed on maturation. Asparagine amide is present on Asn-70. A propeptide spanning residues 74-123 (TAEEHEVMKRLEVVMRDLDSLDYPEEASERETRDFNQEEIANLYTKKEKR) is cleaved from the precursor. Ile-143 carries the post-translational modification Isoleucine amide.

It belongs to the bombinin family. Expressed by the skin glands.

The protein localises to the secreted. Functionally, maximin-1 shows antibacterial activity against both Gram-positive and Gram-negative bacteria. It also shows antimicrobial activity against the fungus C.albicans, but not against A.flavus nor P.uticale. It has little hemolytic activity. It possess a significant cytotoxicity against tumor cell lines. It does not possess a significant anti-HIV activity. It shows high spermicidal activity. Its function is as follows. Maximin-H12 shows antimicrobial activity against bacteria and against the fungus C.albicans. Shows strong hemolytic activity. The chain is Maximins 1/H12 from Bombina maxima (Giant fire-bellied toad).